A 425-amino-acid polypeptide reads, in one-letter code: Histone-binding protein RBBP7 (425 aa).

Ala2 bears the N-acetylalanine mark. Ser3 is modified (phosphoserine). Lys4 bears the N6-acetyllysine; alternate mark. Residue Lys4 forms a Glycyl lysine isopeptide (Lys-Gly) (interchain with G-Cter in SUMO2); alternate linkage. Lys4 is covalently cross-linked (Glycyl lysine isopeptide (Lys-Gly) (interchain with G-Cter in ubiquitin); alternate). Phosphothreonine is present on Thr10. 7 WD repeats span residues 47-122 (QWLP…KINH), 128-173 (RARY…LRLR), 181-217 (GLSW…KIVD), 228-269 (VVED…HLVD), 275-312 (VNCL…LHTF), 318-369 (EIFQ…LFIH), and 376-403 (ISDF…IWQM). A Phosphoserine modification is found at Ser95. Lys101 is covalently cross-linked (Glycyl lysine isopeptide (Lys-Gly) (interchain with G-Cter in SUMO2)). Lys119 carries the post-translational modification N6-acetyllysine. Residue Lys155 forms a Glycyl lysine isopeptide (Lys-Gly) (interchain with G-Cter in SUMO2) linkage. Lys159 is modified (N6-acetyllysine; alternate). Lys159 participates in a covalent cross-link: Glycyl lysine isopeptide (Lys-Gly) (interchain with G-Cter in SUMO2); alternate. Ser354 carries the post-translational modification Phosphoserine.

The protein belongs to the WD repeat RBAP46/RBAP48/MSI1 family. As to quaternary structure, binds directly to helix 1 of the histone fold of histone H4, a region that is not accessible when H4 is in chromatin. Subunit of the type B histone acetyltransferase (HAT) complex, composed of RBBP7 and HAT1. Subunit of the core histone deacetylase (HDAC) complex, which is composed of HDAC1, HDAC2, RBBP4 and RBBP7. The core HDAC complex associates with SIN3A, ARID4B/SAP180, SAP18, SAP30, SAP130, SUDS3/SAP45 and possibly ARID4A/RBP1 and ING1 to form the SIN3 HDAC complex. Component of the nucleosome remodeling and deacetylase (NuRD) repressor complex, composed of core proteins MTA1, MTA2, MTA3, RBBP4, RBBP7, HDAC1, HDAC2, MBD2, MBD3, and peripherally associated proteins CDK2AP1, CDK2AP2, GATAD2A, GATAD2B, CHD3, CHD4 and CHD5. The exact stoichiometry of the NuRD complex is unknown, and some subunits such as MBD2 and MBD3, GATAD2A and GATAD2B, and CHD3, CHD4 and CHD5 define mutually exclusive NuRD complexes. The NuRD complex may interact with MBD3L1. The NuRD complex may interact with MBD3L2. Subunit of the PRC2/EED-EZH2 complex, which is composed of at least EED, EZH2, RBBP4, RBBP7 and SUZ12. The PRC2/EED-EZH2 complex may also associate with HDAC1. Component of the NURF-1 ISWI chromatin remodeling complex (also called the nucleosome-remodeling factor (NURF) complex) at least composed of SMARCA1, BPTF, RBBP4 and RBBP7. Within the complex interacts with SMARCA1. Component of the BPFT-SMARCA1 complex at least composed of SMARCA1, BPFT, RBBP4 and RBBP7; the complex is catalytically inactive and does not remodel chromatin. Within the complex interacts with SMARCA1. Interacts with BRCA1. Interacts with CDK2AP1. Interacts with CENPA. Interacts with CHD3. Interacts with CHD4. Interacts with CREBBP, and this interaction may be enhanced by the binding of phosphorylated CREB1 to CREBBP. Interacts with HDAC7. Interacts with MTA1. Interacts with PWWP2B. Interacts with RB1 (via viral protein-binding domain). Interacts with SUV39H1.

It is found in the nucleus. Functionally, core histone-binding subunit that may target chromatin remodeling factors, histone acetyltransferases and histone deacetylases to their histone substrates in a manner that is regulated by nucleosomal DNA. Component of several complexes which regulate chromatin metabolism. These include the type B histone acetyltransferase (HAT) complex, which is required for chromatin assembly following DNA replication; the core histone deacetylase (HDAC) complex, which promotes histone deacetylation and consequent transcriptional repression; the nucleosome remodeling and histone deacetylase complex (the NuRD complex), which promotes transcriptional repression by histone deacetylation and nucleosome remodeling; and the PRC2/EED-EZH2 complex, which promotes repression of homeotic genes during development; and the NURF (nucleosome remodeling factor) complex. The polypeptide is Histone-binding protein RBBP7 (RBBP7) (Bos taurus (Bovine)).